The following is a 160-amino-acid chain: Cytochrome b6-f complex subunit 4 (160 aa).

The next 3 helical transmembrane spans lie at 36 to 56, 95 to 115, and 131 to 151; these read LLYL…GLAV, LLGV…PFIE, and LVFI…CLPI.

This sequence belongs to the cytochrome b family. PetD subfamily. The 4 large subunits of the cytochrome b6-f complex are cytochrome b6, subunit IV (17 kDa polypeptide, petD), cytochrome f and the Rieske protein, while the 4 small subunits are petG, petL, petM and petN. The complex functions as a dimer.

The protein resides in the plastid. It localises to the chloroplast thylakoid membrane. Component of the cytochrome b6-f complex, which mediates electron transfer between photosystem II (PSII) and photosystem I (PSI), cyclic electron flow around PSI, and state transitions. The polypeptide is Cytochrome b6-f complex subunit 4 (Thalassiosira pseudonana (Marine diatom)).